The following is a 546-amino-acid chain: Chaperonin GroEL (546 aa).

ATP-binding positions include 30-33, lysine 51, 87-91, glycine 415, 479-481, and aspartate 495; these read TLGP, DGTTT, and NAA.

It belongs to the chaperonin (HSP60) family. In terms of assembly, forms a cylinder of 14 subunits composed of two heptameric rings stacked back-to-back. Interacts with the co-chaperonin GroES.

It localises to the cytoplasm. The catalysed reaction is ATP + H2O + a folded polypeptide = ADP + phosphate + an unfolded polypeptide.. Its function is as follows. Together with its co-chaperonin GroES, plays an essential role in assisting protein folding. The GroEL-GroES system forms a nano-cage that allows encapsulation of the non-native substrate proteins and provides a physical environment optimized to promote and accelerate protein folding. The polypeptide is Chaperonin GroEL (Pseudomonas putida (strain ATCC 47054 / DSM 6125 / CFBP 8728 / NCIMB 11950 / KT2440)).